The primary structure comprises 103 residues: Small ribosomal subunit protein uS10 (103 aa).

It belongs to the universal ribosomal protein uS10 family. In terms of assembly, part of the 30S ribosomal subunit.

In terms of biological role, involved in the binding of tRNA to the ribosomes. This chain is Small ribosomal subunit protein uS10, found in Acetivibrio thermocellus (strain ATCC 27405 / DSM 1237 / JCM 9322 / NBRC 103400 / NCIMB 10682 / NRRL B-4536 / VPI 7372) (Clostridium thermocellum).